Here is a 264-residue protein sequence, read N- to C-terminus: Thymidylate synthase (264 aa).

Arg-21 is a dUMP binding site. Residue His-51 participates in (6R)-5,10-methylene-5,6,7,8-tetrahydrofolate binding. 126 to 127 contacts dUMP; that stretch reads RR. Cys-146 acts as the Nucleophile in catalysis. DUMP contacts are provided by residues 166–169, Asn-177, and 207–209; these read RSCD and HLY. Asp-169 serves as a coordination point for (6R)-5,10-methylene-5,6,7,8-tetrahydrofolate. Residue Ala-263 coordinates (6R)-5,10-methylene-5,6,7,8-tetrahydrofolate.

It belongs to the thymidylate synthase family. Bacterial-type ThyA subfamily. As to quaternary structure, homodimer.

It localises to the cytoplasm. It carries out the reaction dUMP + (6R)-5,10-methylene-5,6,7,8-tetrahydrofolate = 7,8-dihydrofolate + dTMP. The protein operates within pyrimidine metabolism; dTTP biosynthesis. Its function is as follows. Catalyzes the reductive methylation of 2'-deoxyuridine-5'-monophosphate (dUMP) to 2'-deoxythymidine-5'-monophosphate (dTMP) while utilizing 5,10-methylenetetrahydrofolate (mTHF) as the methyl donor and reductant in the reaction, yielding dihydrofolate (DHF) as a by-product. This enzymatic reaction provides an intracellular de novo source of dTMP, an essential precursor for DNA biosynthesis. This chain is Thymidylate synthase, found in Hamiltonella defensa subsp. Acyrthosiphon pisum (strain 5AT).